Reading from the N-terminus, the 440-residue chain is MDQLAHHYRAHIAELNRRVAEILSREALSGLVIHSGQPHRMFLDDINYPFKANPHFKAWLPVLDNPNCWLVVNGRDKPQLIFYRPVDFWHKVSDVPDMFWTEYFDIKLLTKADKVAEFLPTDIANWAYLGEHLDVAEVLGFTSRNPDAVMSYLHYHRTTKTEYELECMRRANQIAVQGHLAAKNAFYNGASEFEIQQHYLSAVGQSENEVPYGNIIALNQNAAILHYTALEHQSPAKRLSFLIDAGASYFGYASDITRTYAFEKNRFDELITAMNKAQLELIDMMRPGVRYPDLHLATHAKVAQMLLDFDLATGDVQGLIDQGITSAFFPHGLGHMLGLQVHDVGGFSHDERGTHIAAPEAHPFLRCTRILAPNQVLTMEPGLYIIDTLLNELKQDSRGQQINWQTVDELRPFGGIRIEDNVIVHQDRNENMTRELGLTD.

Aspartate 244, aspartate 255, histidine 335, glutamate 380, and glutamate 419 together coordinate Mn(2+).

It belongs to the peptidase M24B family. Bacterial-type prolidase subfamily. Requires Mn(2+) as cofactor.

It catalyses the reaction Xaa-L-Pro dipeptide + H2O = an L-alpha-amino acid + L-proline. In terms of biological role, splits dipeptides with a prolyl residue in the C-terminal position. The sequence is that of Xaa-Pro dipeptidase from Shewanella baltica (strain OS195).